We begin with the raw amino-acid sequence, 129 residues long: MAKAPIRARKRVRKQVSDGVAHIHASFNNTIVTITDRQGNALGWATAGGSGFRGSRKSTPFAAQVAAERCADAVKEYGIKNLEVMVKGPGPGRESTIRALNAAGFRITNITDVTPIPHNGCRPPKKRRV.

This sequence belongs to the universal ribosomal protein uS11 family. As to quaternary structure, part of the 30S ribosomal subunit. Interacts with proteins S7 and S18. Binds to IF-3.

Located on the platform of the 30S subunit, it bridges several disparate RNA helices of the 16S rRNA. Forms part of the Shine-Dalgarno cleft in the 70S ribosome. This chain is Small ribosomal subunit protein uS11, found in Escherichia fergusonii (strain ATCC 35469 / DSM 13698 / CCUG 18766 / IAM 14443 / JCM 21226 / LMG 7866 / NBRC 102419 / NCTC 12128 / CDC 0568-73).